The following is an 822-amino-acid chain: Adhesion G protein-coupled receptor E2 (822 aa).

Positions 1–18 (MGGRVFLAFCVWLTLLGA) are cleaved as a signal peptide. Residues 19–530 (ETQDSRDCAR…DVQEEDPVLT (512 aa)) lie on the Extracellular side of the membrane. The 42-residue stretch at 22-63 (DSRDCARWCPENSSCVNATACRCNPGFSSSSEIFTSPTEICD) folds into the EGF-like 1 domain. 5 disulfides stabilise this stretch: Cys26-Cys36, Cys30-Cys42, Cys44-Cys62, Cys68-Cys82, and Cys76-Cys91. N-linked (GlcNAc...) asparagine glycosylation is found at Asn33 and Asn38. The EGF-like 1; calcium-binding domain maps to 64–103 (DINECVPPSKVSCGKSSDCRNTEGSYDCVCNPGYELVSGA). Asn108 carries N-linked (GlcNAc...) asparagine glycosylation. The 44-residue stretch at 116-159 (DVDECQQNPRLCKSYGTCVNTLGSFTCQCLPGFKFKPEDPKLCT) folds into the EGF-like 2; calcium-binding domain. Cystine bridges form between Cys120–Cys133, Cys127–Cys142, Cys144–Cys158, Cys164–Cys177, and Cys171–Cys186. The EGF-like 3; calcium-binding domain occupies 160 to 198 (DVNECTSGQNPCHSSTHCLNNVGSYQCRCRPGWQPIPGS). N-linked (GlcNAc...) asparagine glycosylation is found at Asn203, Asn222, Asn351, Asn371, Asn427, Asn449, and Asn453. One can recognise an EGF-like 4; calcium-binding domain in the interval 209-247 (DVDECSSGLHQCDNSTVCFNTVGSYTCRCRPGWEPKHGI). Disulfide bonds link Cys213–Cys226 and Cys220–Cys235. The GAIN-B domain occupies 351 to 523 (NFSYPAGTEF…AVLMAPYDVQ (173 aa)). Cystine bridges form between Cys475–Cys505 and Cys493–Cys507. A GPS region spans residues 475–523 (CVFWEHGQNGCGHWATTGCSTMDTRDTSTICRCTHLSSFAVLMAPYDVQ). The chain crosses the membrane as a helical span at residues 531 to 551 (VITYMGLSLSLLCLLLAALTF). Residues 552–562 (LLCKAIQNIST) are Cytoplasmic-facing. Residues 563 to 583 (SLHLQLSLCLLLAHLLFLVAI) form a helical membrane-spanning segment. Over 584–589 (DRTEHE) the chain is Extracellular. The chain crosses the membrane as a helical span at residues 590 to 610 (VLCAIIASALHYLYLAAFTWM). Residues 611-637 (LLEALYLFLTARNLMVVNYSSINRFTK) lie on the Cytoplasmic side of the membrane. The chain crosses the membrane as a helical span at residues 638 to 658 (KLMFPVAYGVPAVTVAISAAS). Over 659-676 (RPHLYGTPSRCWLQPEKG) the chain is Extracellular. A helical membrane pass occupies residues 677–697 (FIWGFLGPVCAIFSVNLALLL). The Cytoplasmic portion of the chain corresponds to 698–728 (VTLWILKNRLSSLNNEVSTLQNTRMLAFKAT). A helical membrane pass occupies residues 729–749 (AQLFILGCTWCLGILQVGPAA). Residues 750 to 753 (RVMA) are Extracellular-facing. A helical transmembrane segment spans residues 754 to 774 (YLFTIINSLQGVFIFLVYCLL). The Cytoplasmic segment spans residues 775–822 (SQQVREQYRKWSKGFRKLRTESEMHTLSSSAKRDTPKPSTPGLLGLQS). Residues 797–822 (EMHTLSSSAKRDTPKPSTPGLLGLQS) are disordered.

The protein belongs to the G-protein coupled receptor 2 family. Adhesion G-protein coupled receptor (ADGR) subfamily. In terms of assembly, forms a heterodimer, consisting of a large extracellular region non-covalently linked to a seven-transmembrane moiety. Interacts with chondroitin sulfate; the interaction with chondroitin sulfate is calcium-dependent. Interacts with CD55. Post-translationally, autoproteolytically cleaved into 2 subunits, an extracellular alpha subunit and a seven-transmembrane beta subunit.

It is found in the cell membrane. It localises to the cell projection. The protein localises to the ruffle membrane. In terms of biological role, cell surface receptor that binds to the chondroitin sulfate moiety of glycosaminoglycan chains and promotes cell attachment. Promotes granulocyte chemotaxis, degranulation and adhesion. In macrophages, promotes the release of inflammatory cytokines, including IL8 and TNF. Signals probably through G-proteins. This chain is Adhesion G protein-coupled receptor E2 (ADGRE2), found in Macaca mulatta (Rhesus macaque).